We begin with the raw amino-acid sequence, 256 residues long: Calsenilin (256 aa).

The disordered stretch occupies residues 1 to 30 (MQRAKEVMKVSDGSLLGEPGRTPLSKKEGV). Position 14 is a phosphoserine (Ser14). A Glycyl lysine isopeptide (Lys-Gly) (interchain with G-Cter in SUMO1) cross-link involves residue Lys26. S-palmitoyl cysteine attachment occurs at residues Cys45 and Cys46. Phosphoserine occurs at positions 60 and 63. One can recognise an EF-hand 1; degenerate domain in the interval 67 to 123 (LELSAVRHQPEGLDQLQAQTKFTKKELQSLYRGFKNECPTGLVDEDTFKLIYSQFFP). Residue Lys90 forms a Glycyl lysine isopeptide (Lys-Gly) (interchain with G-Cter in SUMO1) linkage. EF-hand domains are found at residues 126-161 (DATT…LLRG), 162-197 (TVHE…IYDM), and 210-245 (APLE…DENI). Residues Asp175, Asn177, Asp179, Tyr181, Glu186, Asp223, Asn225, Asp227, and Glu234 each coordinate Ca(2+). The interval 243–256 (ENIMSSMQLFENVI) is interaction with KCND2.

It belongs to the recoverin family. In terms of assembly, binds to DNA as a homomultimer. Dimerization is induced by binding to calcium. Interacts with the C-terminus of PSEN1 and PSEN2 and with PSEN2 CTF subunit. Associates with KCN1. Component of heteromultimeric potassium channels. Identified in potassium channel complexes containing KCND1, KCND2, KCND3, KCNIP1, KCNIP2, KCNIP3, KCNIP4, DPP6 and DPP10. Interacts with KCND2 and KCND3. Post-translationally, palmitoylated. Palmitoylation enhances association with the plasma membrane. In terms of processing, proteolytically cleaved by caspase-3.

It is found in the cytoplasm. Its subcellular location is the cell membrane. The protein localises to the endoplasmic reticulum. The protein resides in the golgi apparatus. It localises to the nucleus. In terms of biological role, regulatory subunit of Kv4/D (Shal)-type voltage-gated rapidly inactivating A-type potassium channels, such as KCND2/Kv4.2 and KCND3/Kv4.3. Modulates channel expression at the cell membrane, gating characteristics, inactivation kinetics and rate of recovery from inactivation in a calcium-dependent and isoform-specific manner. Functionally, may play a role in the regulation of PSEN2 proteolytic processing and apoptosis. Together with PSEN2 involved in modulation of amyloid-beta formation. Its function is as follows. Calcium-dependent transcriptional repressor that binds to the DRE element of genes including PDYN and FOS. Affinity for DNA is reduced upon binding to calcium and enhanced by binding to magnesium. Seems to be involved in nociception. This is Calsenilin (KCNIP3) from Bos taurus (Bovine).